Here is a 400-residue protein sequence, read N- to C-terminus: Poly(A) polymerase type 3 (400 aa).

Residues 97–99 (FGS), T106, 110–112 (DID), D164, K225, Y234, and 243–244 (GV) each bind ATP. Mg(2+)-binding residues include D110, D112, and D164. Positions 382 to 390 (GEIINKNKK) match the Nuclear localization signal motif.

The protein belongs to the poly(A) polymerase family. As to quaternary structure, monomer. The cofactor is Mg(2+). Mn(2+) is required as a cofactor.

It localises to the nucleus. The enzyme catalyses RNA(n) + ATP = RNA(n)-3'-adenine ribonucleotide + diphosphate. Functionally, polymerase that creates the 3'-poly(A) tail of mRNA's. May acquire specificity through interaction with a cleavage and polyadenylation factor (CPSF). This Xenopus laevis (African clawed frog) protein is Poly(A) polymerase type 3.